The following is a 122-amino-acid chain: Large-conductance mechanosensitive channel (122 aa).

The next 2 helical transmembrane spans lie at 29-49 (FGKI…GLIF) and 66-86 (GVFI…FLFI).

The protein belongs to the MscL family. In terms of assembly, homopentamer.

It localises to the cell membrane. Its function is as follows. Channel that opens in response to stretch forces in the membrane lipid bilayer. May participate in the regulation of osmotic pressure changes within the cell. The chain is Large-conductance mechanosensitive channel from Macrococcus caseolyticus (strain JCSC5402) (Macrococcoides caseolyticum).